Consider the following 328-residue polypeptide: Sterol-4-alpha-carboxylate 3-dehydrogenase, decarboxylating (328 aa).

The Proton acceptor role is filled by Y145. K149 is a binding site for NAD(+). Residues 259-279 (LHMVLPTPIALSLVWIMALIW) form a helical membrane-spanning segment.

Belongs to the 3-beta-HSD family. Homodimer.

It is found in the endoplasmic reticulum membrane. The protein resides in the lipid droplet. The catalysed reaction is a 3beta-hydroxysteroid-4alpha-carboxylate + NADP(+) = a 3-oxosteroid + CO2 + NADPH. The enzyme catalyses a 3beta-hydroxysteroid-4alpha-carboxylate + NAD(+) = a 3-oxosteroid + CO2 + NADH. It participates in steroid biosynthesis; zymosterol biosynthesis; zymosterol from lanosterol: step 4/6. Functionally, catalyzes the NAD(P)(+)-dependent oxidative decarboxylation of the C4 methyl groups of 4-alpha-carboxysterols in post-squalene cholesterol biosynthesis. This chain is Sterol-4-alpha-carboxylate 3-dehydrogenase, decarboxylating (nsdhl), found in Dictyostelium discoideum (Social amoeba).